A 242-amino-acid polypeptide reads, in one-letter code: Probable transcriptional regulatory protein Dred_1658 (242 aa).

It belongs to the TACO1 family.

The protein resides in the cytoplasm. The sequence is that of Probable transcriptional regulatory protein Dred_1658 from Desulforamulus reducens (strain ATCC BAA-1160 / DSM 100696 / MI-1) (Desulfotomaculum reducens).